A 729-amino-acid polypeptide reads, in one-letter code: Cytoplasmic polyadenylation element-binding protein 4 (729 aa).

2 disordered regions span residues 20-50 (FPVRFHPHLQPPHHHQNATPNPAAFINNNTA) and 78-133 (EKAK…KEKL). The span at 24-35 (FHPHLQPPHHHQ) shows a compositional bias: basic residues. The span at 83–96 (QQQEQQDPLEKQQL) shows a compositional bias: low complexity. Serine 97, serine 99, and serine 137 each carry phosphoserine. The tract at residues 218–324 (FGGSFSPQIG…RDHRRGLNGG (107 aa)) is disordered. A compositionally biased stretch (basic residues) spans 232-249 (HHPHHPHFQHHHSQHQQQ). A phosphoserine mark is found at serine 252 and serine 255. Over residues 285–300 (WSSYQSPSPTPSSSWS) the composition is skewed to low complexity. The segment covering 301 to 311 (PGGGGYGGWGA) has biased composition (gly residues). Threonine 326 is modified (phosphothreonine). Phosphoserine occurs at positions 330 and 332. RRM domains follow at residues 472–563 (RKVF…PWNL) and 580–662 (KTIF…PYVL). The interval 541–543 (KLY) is RNA-binding. Cysteine 667, cysteine 675, cysteine 684, cysteine 689, cysteine 694, cysteine 697, histidine 702, and histidine 710 together coordinate Zn(2+).

Belongs to the RRM CPEB family. As to quaternary structure, interacts with TOB1. As to expression, highly expressed in brain, including hippocampus, amygdala, granule and Purkinje cells of the cerebellum (at protein level). Expressed in spinal cord (at protein level). Expressed in kidney, lung and heart (at protein level). Expressed in liver (at protein level). Expressed in spleen and testis (at protein level). Weakly expressed in ovary and in granular cells of dentate gyrus and the pyramidal cells of CA3 and CA1 of the hippocampus.

It is found in the cytoplasm. It localises to the cell projection. The protein resides in the dendrite. The protein localises to the dendritic spine. Its subcellular location is the postsynaptic density. It is found in the axon. It localises to the growth cone. The protein resides in the endoplasmic reticulum. The protein localises to the perinuclear region. Functionally, sequence-specific RNA-binding protein that binds to the cytoplasmic polyadenylation element (CPE), an uridine-rich sequence element (consensus sequence 5'-UUUUUAU-3') within the mRNA 3'-UTR. RNA binding results in a clear conformational change analogous to the Venus fly trap mechanism. Regulates activation of unfolded protein response (UPR) in the process of adaptation to ER stress in liver, by maintaining translation of CPE-regulated mRNAs in conditions in which global protein synthesis is inhibited. Required for cell cycle progression, specifically for cytokinesis and chromosomal segregation. Plays a role as an oncogene promoting tumor growth and progression by positively regulating translation of t-plasminogen activator/PLAT. Stimulates proliferation of melanocytes. In contrast to CPEB1 and CPEB3, does not play role in synaptic plasticity, learning and memory. The protein is Cytoplasmic polyadenylation element-binding protein 4 (Cpeb4) of Mus musculus (Mouse).